A 455-amino-acid chain; its full sequence is Chitin deacetylase 2 (455 aa).

Positions 1–19 (MIPSTAAALLTLTAGAAFA) are cleaved as a signal peptide. Asparagine 86, asparagine 98, asparagine 122, and asparagine 142 each carry an N-linked (GlcNAc...) asparagine glycan. Residues 157 to 347 (MTWGLGFDDG…IKSAFNYIVP (191 aa)) form the NodB homology domain. Aspartate 164 acts as the Proton acceptor in catalysis. Residue aspartate 164 participates in acetate binding. Aspartate 165 is a binding site for Co(2+). N-linked (GlcNAc...) asparagine glycosylation occurs at asparagine 168. Co(2+)-binding residues include histidine 214 and histidine 218. Position 255 (tyrosine 255) interacts with acetate. Residues asparagine 270 and asparagine 308 are each glycosylated (N-linked (GlcNAc...) asparagine). Residue histidine 321 is the Proton donor of the active site. N-linked (GlcNAc...) asparagine glycans are attached at residues asparagine 325, asparagine 353, asparagine 362, and asparagine 377. The disordered stretch occupies residues 381–423 (STTQKDGSSSTNTASGSGAAGSASATSSSDDSSSSGGSSGSSG). Asparagine 426 carries an N-linked (GlcNAc...) asparagine glycan. Serine 429 is lipidated: GPI-anchor amidated serine. A propeptide spans 430–455 (GALGMFDSLSGVGLILGGVVAGVMLL) (removed in mature form).

The protein belongs to the polysaccharide deacetylase family. Requires Co(2+) as cofactor. In terms of processing, the GPI anchor is required for the attachment to the cell membrane but not for cell surface targeting.

It localises to the secreted. It is found in the cell wall. The protein localises to the cell membrane. The enzyme catalyses [(1-&gt;4)-N-acetyl-beta-D-glucosaminyl](n) + n H2O = chitosan + n acetate. Its function is as follows. Hydrolyzes the N-acetamido groups of N-acetyl-D-glucosamine residues in chitin to form chitosan and acetate. Chitosan is required to anchor melanin to the cell wall, for maintenance of cell wall integrity, and for proper cytokinesis. Chitosan offers an advantage during infection as it is less readily detected than chitin by host immunosurveillance mechanisms. The sequence is that of Chitin deacetylase 2 from Cryptococcus neoformans var. grubii serotype A (strain H99 / ATCC 208821 / CBS 10515 / FGSC 9487) (Filobasidiella neoformans var. grubii).